The sequence spans 222 residues: L-serine dehydratase, beta chain (222 aa).

An ACT domain is found at 150–222 (TILLEYPEQR…RFTTAKYVEV (73 aa)).

The protein belongs to the iron-sulfur dependent L-serine dehydratase family. As to quaternary structure, heterooctamer of four alpha chains and four beta chains. The cofactor is [4Fe-4S] cluster.

The catalysed reaction is L-serine = pyruvate + NH4(+). It functions in the pathway carbohydrate biosynthesis; gluconeogenesis. This is L-serine dehydratase, beta chain (sdhB) from Peptoniphilus asaccharolyticus (Peptostreptococcus asaccharolyticus).